We begin with the raw amino-acid sequence, 101 residues long: Apolipoprotein C-II (101 aa).

The first 22 residues, 1 to 22, serve as a signal peptide directing secretion; that stretch reads MGIRYLLVLVLVLLVLGCEVQG. The interval 66-74 is lipid binding; that stretch reads TMDEKIREI. The segment at 78-101 is lipoprotein lipase cofactor; sequence STAAVSTYAGIFTDQLLSMLKGDQ.

This sequence belongs to the apolipoprotein C2 family. Proapolipoprotein C-II is synthesized as a sialic acid containing glycoprotein which is subsequently desialylated prior to its proteolytic processing. In terms of processing, proapolipoprotein C-II, the major form found in plasma undergoes proteolytic cleavage of its N-terminal hexapeptide to generate apolipoprotein C-II, which occurs as the minor form in plasma.

The protein localises to the secreted. Component of chylomicrons, very low-density lipoproteins (VLDL), low-density lipoproteins (LDL), and high-density lipoproteins (HDL) in plasma. Plays an important role in lipoprotein metabolism as an activator of lipoprotein lipase. Both proapolipoprotein C-II and apolipoprotein C-II can activate lipoprotein lipase. This Leptonychotes weddellii (Weddell seal) protein is Apolipoprotein C-II (APOC2).